Consider the following 186-residue polypeptide: UPF0340 protein SZO_02480 (186 aa).

Belongs to the UPF0340 family.

The protein is UPF0340 protein SZO_02480 of Streptococcus equi subsp. zooepidemicus (strain H70).